We begin with the raw amino-acid sequence, 24 residues long: GLNALKKVFQGIHEAIKLINNHVQ.

As to expression, expressed by the skin glands.

Its subcellular location is the secreted. Its function is as follows. Antimicrobial peptide with activity against fungus (C.albicans) and Gram-positive and Gram-negative bacteria (S.aureus and E.coli). Also has low hemolytic activity against human erythrocytes. This chain is Pseudin-2, found in Pseudis paradoxa (Paradoxical frog).